The following is a 117-amino-acid chain: Small ribosomal subunit protein uS12c (117 aa).

The segment at 9-40 (RNARQPIENRKKSPALRGCPQRRGTITPKKPN) is disordered.

The protein belongs to the universal ribosomal protein uS12 family. In terms of assembly, part of the 30S ribosomal subunit.

The protein localises to the plastid. It is found in the chloroplast. In terms of biological role, with S4 and S5 plays an important role in translational accuracy. Located at the interface of the 30S and 50S subunits. This Pinus koraiensis (Korean pine) protein is Small ribosomal subunit protein uS12c (rps12).